The chain runs to 292 residues: Elongation factor Ts (292 aa).

Positions 80–83 are involved in Mg(2+) ion dislocation from EF-Tu; sequence TDFV.

The protein belongs to the EF-Ts family.

The protein resides in the cytoplasm. Associates with the EF-Tu.GDP complex and induces the exchange of GDP to GTP. It remains bound to the aminoacyl-tRNA.EF-Tu.GTP complex up to the GTP hydrolysis stage on the ribosome. The sequence is that of Elongation factor Ts from Oenococcus oeni (strain ATCC BAA-331 / PSU-1).